The following is a 563-amino-acid chain: E3 ubiquitin-protein ligase IpaH2.5 (563 aa).

An interaction with target proteins region spans residues 1–270 (MIKSTNIQVI…PDYSGPQIFF (270 aa)). LRR repeat units lie at residues 69–90 (LQNQEAELNLSELDLKTLPDLP), 91–115 (PQITTLEIRKNLLTHLPDLPPMLKV), 117–130 (HAQFNQLESLPALP), 131–150 (ETLEELNAGDNKIKELPFLP), 151–170 (ENLTHLRVHNNRLHILPLLP), 171–195 (PELKLLVVSGNRLDSIPPFPDKLEG), 197–209 (ALANNFIEQLPEL), and 210–233 (PFSMNRAVLMNNNLTTLPESVLRL). The linker stretch occupies residues 271–281 (SMGNSATISAP). Residues 282-563 (EHSLADAVTA…YRQLTDEVLA (282 aa)) are E3 ubiquitin-protein ligase catalytic domain. Residues 284-563 (SLADAVTAWF…YRQLTDEVLA (280 aa)) form the NEL domain. Cys368 (glycyl thioester intermediate) is an active-site residue.

Belongs to the LRR-containing bacterial E3 ligase family. As to quaternary structure, interacts with human RBCK1/HOIL-1 and RNF31/HOIP components of the LUBAC complex. Post-translationally, ubiquitinated in the presence of host E1 ubiquitin-activating enzyme, E2 ubiquitin-conjugating enzyme and ubiquitin.

Its subcellular location is the secreted. The protein resides in the host cytoplasm. It carries out the reaction S-ubiquitinyl-[E2 ubiquitin-conjugating enzyme]-L-cysteine + [acceptor protein]-L-lysine = [E2 ubiquitin-conjugating enzyme]-L-cysteine + N(6)-ubiquitinyl-[acceptor protein]-L-lysine.. It participates in protein modification; protein ubiquitination. Exists in an autoinhibited state in the absence of substrate protein, probably due to interactions of the leucine-rich repeat domain with the catalytic domain. Is activated upon binding to a substrate protein. E3 ubiquitin-protein ligase effector that inhibits host cell innate immunity during bacterial infection by catalyzing 'Lys-48'-linked polyubiquitination and subsequent degradation of host RNF31/HOIP. Host RNF31/HOIP is the catalytic component of the LUBAC complex, which conjugates linear ('Met-1'-linked) polyubiquitin chains at the surface of bacteria invading the host cytosol to form the ubiquitin coat surrounding bacteria. The bacterial ubiquitin coat acts as an 'eat-me' signal for xenophagy and promotes NF-kappa-B activation. This chain is E3 ubiquitin-protein ligase IpaH2.5, found in Shigella flexneri.